Consider the following 305-residue polypeptide: Ribonuclease BN (305 aa).

Zn(2+) contacts are provided by H64, H66, D68, H69, H141, D212, and H270. D68 serves as the catalytic Proton acceptor.

It belongs to the RNase Z family. RNase BN subfamily. As to quaternary structure, homodimer. The cofactor is Zn(2+).

In terms of biological role, zinc phosphodiesterase, which has both exoribonuclease and endoribonuclease activities. This Escherichia coli O17:K52:H18 (strain UMN026 / ExPEC) protein is Ribonuclease BN.